The chain runs to 393 residues: Formate-dependent phosphoribosylglycinamide formyltransferase (393 aa).

Residues 22 to 23 (EL) and glutamate 82 each bind N(1)-(5-phospho-beta-D-ribosyl)glycinamide. Residues arginine 114, lysine 155, 160–165 (SSGHGQ), 195–198 (EGFI), and glutamate 203 contribute to the ATP site. The ATP-grasp domain occupies 119-308 (RLAAEELGLK…QFALHARAIL (190 aa)). 2 residues coordinate Mg(2+): glutamate 267 and glutamate 279. Residues aspartate 286, lysine 356, and 363–364 (RR) contribute to the N(1)-(5-phospho-beta-D-ribosyl)glycinamide site.

The protein belongs to the PurK/PurT family. As to quaternary structure, homodimer.

It catalyses the reaction N(1)-(5-phospho-beta-D-ribosyl)glycinamide + formate + ATP = N(2)-formyl-N(1)-(5-phospho-beta-D-ribosyl)glycinamide + ADP + phosphate + H(+). It participates in purine metabolism; IMP biosynthesis via de novo pathway; N(2)-formyl-N(1)-(5-phospho-D-ribosyl)glycinamide from N(1)-(5-phospho-D-ribosyl)glycinamide (formate route): step 1/1. Involved in the de novo purine biosynthesis. Catalyzes the transfer of formate to 5-phospho-ribosyl-glycinamide (GAR), producing 5-phospho-ribosyl-N-formylglycinamide (FGAR). Formate is provided by PurU via hydrolysis of 10-formyl-tetrahydrofolate. The chain is Formate-dependent phosphoribosylglycinamide formyltransferase from Actinobacillus pleuropneumoniae serotype 3 (strain JL03).